We begin with the raw amino-acid sequence, 326 residues long: 4-hydroxythreonine-4-phosphate dehydrogenase (326 aa).

Substrate is bound by residues His-134 and Thr-135. His-164, His-209, and His-264 together coordinate a divalent metal cation. Substrate contacts are provided by Lys-272, Asn-281, and Arg-290.

This sequence belongs to the PdxA family. As to quaternary structure, homodimer. Requires Zn(2+) as cofactor. The cofactor is Mg(2+). Co(2+) serves as cofactor.

The protein resides in the cytoplasm. It carries out the reaction 4-(phosphooxy)-L-threonine + NAD(+) = 3-amino-2-oxopropyl phosphate + CO2 + NADH. Its pathway is cofactor biosynthesis; pyridoxine 5'-phosphate biosynthesis; pyridoxine 5'-phosphate from D-erythrose 4-phosphate: step 4/5. Its function is as follows. Catalyzes the NAD(P)-dependent oxidation of 4-(phosphooxy)-L-threonine (HTP) into 2-amino-3-oxo-4-(phosphooxy)butyric acid which spontaneously decarboxylates to form 3-amino-2-oxopropyl phosphate (AHAP). The polypeptide is 4-hydroxythreonine-4-phosphate dehydrogenase (Colwellia psychrerythraea (strain 34H / ATCC BAA-681) (Vibrio psychroerythus)).